The chain runs to 223 residues: Putative oxidoreductase MT1904 (223 aa).

4 to 28 is an NADP(+) binding site; the sequence is LVTGGDTDLGRTMAEGFRNDGHKVT. Serine 128 is a binding site for substrate.

Belongs to the short-chain dehydrogenases/reductases (SDR) family.

The chain is Putative oxidoreductase MT1904 from Mycobacterium tuberculosis (strain CDC 1551 / Oshkosh).